The primary structure comprises 512 residues: Respiratory nitrate reductase 1 beta chain (512 aa).

4Fe-4S ferredoxin-type domains follow at residues 7–35 (VGMVLNLDKCIGCHTCSVTCKNVWTSREG), 175–206 (TFMMYLPRLCEHCLNPACVATCPSGAIYKREE), and 208–237 (GIVLIDQDKCRGWRMCITGCPYKKIYFNWK). Residues C16, C19, C22, C26, C184, C187, and C192 each contribute to the [4Fe-4S] cluster site. [3Fe-4S] cluster is bound by residues C196, C217, and C223. C227, C244, C247, C259, and C263 together coordinate [4Fe-4S] cluster.

Dimer of heterotrimers each composed of an alpha, a beta and a gamma chain. Alpha and beta are catalytic chains; gamma chains are involved in binding the enzyme complex to the cytoplasmic membrane. It depends on [4Fe-4S] cluster as a cofactor. [3Fe-4S] cluster serves as cofactor.

It localises to the cell membrane. It catalyses the reaction nitrate + a quinol = a quinone + nitrite + H2O. In terms of biological role, the nitrate reductase enzyme complex allows E.coli to use nitrate as an electron acceptor during anaerobic growth. The beta chain is an electron transfer unit containing four cysteine clusters involved in the formation of iron-sulfur centers. Electrons are transferred from the gamma chain to the molybdenum cofactor of the alpha subunit. The protein is Respiratory nitrate reductase 1 beta chain (narH) of Escherichia coli (strain K12).